Reading from the N-terminus, the 394-residue chain is Elongation factor Tu (394 aa).

The region spanning 10 to 204 (KPHVNVGTIG…HLDTYIPEPE (195 aa)) is the tr-type G domain. Positions 19–26 (GHVDHGKT) are G1. 19-26 (GHVDHGKT) lines the GTP pocket. Position 26 (T26) interacts with Mg(2+). Positions 60–64 (GITIN) are G2. The segment at 81–84 (DCPG) is G3. Residues 81–85 (DCPGH) and 136–139 (NKCD) contribute to the GTP site. Residues 136 to 139 (NKCD) are G4. The G5 stretch occupies residues 174-176 (SAL).

This sequence belongs to the TRAFAC class translation factor GTPase superfamily. Classic translation factor GTPase family. EF-Tu/EF-1A subfamily. Monomer.

Its subcellular location is the cytoplasm. The enzyme catalyses GTP + H2O = GDP + phosphate + H(+). Functionally, GTP hydrolase that promotes the GTP-dependent binding of aminoacyl-tRNA to the A-site of ribosomes during protein biosynthesis. The chain is Elongation factor Tu from Actinobacillus pleuropneumoniae serotype 5b (strain L20).